The chain runs to 414 residues: MHYCVLSAFLILHLVTVALSLSTCSTLDMDQFMRKRIEAIRGQILSKLKLTSPPEDYPEPEEVPPEVISIYNSTRDLLQEKASRRAAACERERSDEEYYAKEVYKIDMPPFFPSENAIPPTFYRPYFRIVRFDVSAMEKNASNLVKAEFRVFRLQNPKARVPEQRIELYQILKSKDLTSPTQRYIDSKVVKTRAEGEWLSFDVTDAVHEWLHHKDRNLGFKISLHCPCCTFVPSNNYIIPNKSEELEARFAGIDGTSTYTSGDQKTIKSTRKKNSGKTPHLLLMLLPSYRLESQQTNRRKKRALDAAYCFRNVQDNCCLRPLYIDFKRDLGWKWIHEPKGYNANFCAGACPYLWSSDTQHSRVLSLYNTINPEASASPCCVSQDLEPLTILYYIGKTPKIEQLSNMIVKSCKCS.

An N-terminal signal peptide occupies residues 1–19; that stretch reads MHYCVLSAFLILHLVTVAL. Residues Asn-72, Asn-140, and Asn-241 are each glycosylated (N-linked (GlcNAc...) asparagine). Cystine bridges form between Cys-309/Cys-318, Cys-317/Cys-380, Cys-346/Cys-411, and Cys-350/Cys-413.

This sequence belongs to the TGF-beta family. As to quaternary structure, interacts with the serine proteases, HTRA1 and HTRA3. Interacts with ASPN. Interacts with MFAP5. Interacts with Transforming growth factor beta-2 (TGF-beta-2) chain; interaction is non-covalent and maintains (TGF-beta-2) in a latent state. Interacts with LRRC32/GARP; leading to regulate activation of TGF-beta-2. Interacts with NREP; the interaction results in a decrease in TGFB2 autoinduction. In terms of assembly, transforming growth factor beta-2: Homodimer; disulfide-linked. Transforming growth factor beta-2: Interacts with TGF-beta receptors (TGFBR1 and TGFBR2), leading to signal transduction. The precursor proprotein is cleaved in the Golgi apparatus to form Transforming growth factor beta-2 (TGF-beta-2) and Latency-associated peptide (LAP) chains, which remain non-covalently linked, rendering TGF-beta-2 inactive.

The protein resides in the secreted. It localises to the extracellular space. The protein localises to the extracellular matrix. Functionally, precursor of the Latency-associated peptide (LAP) and Transforming growth factor beta-2 (TGF-beta-2) chains, which constitute the regulatory and active subunit of TGF-beta-2, respectively. Its function is as follows. Required to maintain the Transforming growth factor beta-2 (TGF-beta-2) chain in a latent state during storage in extracellular matrix. Associates non-covalently with TGF-beta-2 and regulates its activation via interaction with 'milieu molecules', such as LTBP1 and LRRC32/GARP, that control activation of TGF-beta-2. In terms of biological role, multifunctional protein that regulates various processes such as angiogenesis and heart development. Activation into mature form follows different steps: following cleavage of the proprotein in the Golgi apparatus, Latency-associated peptide (LAP) and Transforming growth factor beta-2 (TGF-beta-2) chains remain non-covalently linked rendering TGF-beta-2 inactive during storage in extracellular matrix. At the same time, LAP chain interacts with 'milieu molecules', such as LTBP1 and LRRC32/GARP, that control activation of TGF-beta-2 and maintain it in a latent state during storage in extracellular milieus. Once activated following release of LAP, TGF-beta-2 acts by binding to TGF-beta receptors (TGFBR1 and TGFBR2), which transduce signal. In Chlorocebus aethiops (Green monkey), this protein is Transforming growth factor beta-2 proprotein (TGFB2).